Consider the following 107-residue polypeptide: Phosphoribosyl-ATP pyrophosphatase (107 aa).

Belongs to the PRA-PH family.

Its subcellular location is the cytoplasm. It catalyses the reaction 1-(5-phospho-beta-D-ribosyl)-ATP + H2O = 1-(5-phospho-beta-D-ribosyl)-5'-AMP + diphosphate + H(+). It functions in the pathway amino-acid biosynthesis; L-histidine biosynthesis; L-histidine from 5-phospho-alpha-D-ribose 1-diphosphate: step 2/9. This chain is Phosphoribosyl-ATP pyrophosphatase, found in Methylobacterium nodulans (strain LMG 21967 / CNCM I-2342 / ORS 2060).